Here is a 625-residue protein sequence, read N- to C-terminus: Low affinity potassium transport system protein Kup (625 aa).

A run of 12 helical transmembrane segments spans residues 15–35 (TIFS…IYII), 58–78 (IIFW…IVSI), 103–123 (FVIV…IIII), 140–160 (LSFE…LFFI), 171–191 (IFSF…LKGI), 218–238 (FFVF…YINI), 251–271 (LFFV…IILL), 282–302 (FLVP…ISII), 340–360 (IYIP…ISIF), 366–386 (LILI…FFSL), 396–416 (FKIL…FIFI), and 422–442 (IICG…IMIT).

This sequence belongs to the HAK/KUP transporter (TC 2.A.72) family.

The protein localises to the cell membrane. The catalysed reaction is K(+)(in) + H(+)(in) = K(+)(out) + H(+)(out). In terms of biological role, responsible for the low-affinity transport of potassium into the cell. Likely operates as a K(+):H(+) symporter. The chain is Low affinity potassium transport system protein Kup from Wigglesworthia glossinidia brevipalpis.